Here is a 489-residue protein sequence, read N- to C-terminus: Adenosylhomocysteinase (489 aa).

Residues threonine 68, aspartate 151, and glutamate 213 each contribute to the substrate site. 214 to 216 lines the NAD(+) pocket; that stretch reads TTT. Substrate contacts are provided by lysine 243 and aspartate 247. NAD(+)-binding positions include asparagine 248, 277–282, glutamate 300, asparagine 335, 356–358, and asparagine 403; these read GYGDVG and IGH.

Belongs to the adenosylhomocysteinase family. The cofactor is NAD(+).

The protein localises to the cytoplasm. The enzyme catalyses S-adenosyl-L-homocysteine + H2O = L-homocysteine + adenosine. The protein operates within amino-acid biosynthesis; L-homocysteine biosynthesis; L-homocysteine from S-adenosyl-L-homocysteine: step 1/1. In terms of biological role, may play a key role in the regulation of the intracellular concentration of adenosylhomocysteine. The protein is Adenosylhomocysteinase of Mycobacterium sp. (strain JLS).